Reading from the N-terminus, the 341-residue chain is Dual oxidase maturation factor 1 (341 aa).

Over 1–24 (MAALGHTLPFYTGTKPTFPMDTTL) the chain is Extracellular. Residues 25–45 (AVIITIFLTALVTFIIILPGI) form a helical membrane-spanning segment. Residues 46 to 51 (RGKTRL) are Cytoplasmic-facing. The chain crosses the membrane as a helical span at residues 52 to 72 (FWLLRVVTSLFIGAVILAVNF). The Extracellular portion of the chain corresponds to 73–183 (SSEWSVGHVN…RLAGHYASAM (111 aa)). N-linked (GlcNAc...) asparagine glycans are attached at residues Asn84, Asn109, and Asn121. The helical transmembrane segment at 184-204 (LWVAFLCWLLANVMLSMPVLV) threads the bilayer. A topological domain (cytoplasmic) is located at residue Tyr205. A helical transmembrane segment spans residues 206–226 (GGHMLLATGLFQLLALFFFSM). Over 227 to 249 (TTSLISPCPLRLGTAVLHTHHGP) the chain is Extracellular. Residues 250–270 (AFWITLATGLLCILLGLVMAV) traverse the membrane as a helical segment. The Cytoplasmic portion of the chain corresponds to 271–341 (AHRMQPHRLK…EHPKESDCSL (71 aa)).

It belongs to the DUOXA family. In terms of assembly, may interact with NUMB.

It localises to the membrane. May be required for the maturation and the transport from the endoplasmic reticulum to the plasma membrane of functional DUOX1. The chain is Dual oxidase maturation factor 1 (Duoxa1) from Mus musculus (Mouse).